The following is a 691-amino-acid chain: Elongation factor G (691 aa).

One can recognise a tr-type G domain in the interval 8 to 283 (EDYRNFGIMA…AVVDYLPSPA (276 aa)). GTP contacts are provided by residues 17–24 (AHIDAGKT), 81–85 (DTPGH), and 135–138 (NKMD).

It belongs to the TRAFAC class translation factor GTPase superfamily. Classic translation factor GTPase family. EF-G/EF-2 subfamily.

The protein resides in the cytoplasm. Its function is as follows. Catalyzes the GTP-dependent ribosomal translocation step during translation elongation. During this step, the ribosome changes from the pre-translocational (PRE) to the post-translocational (POST) state as the newly formed A-site-bound peptidyl-tRNA and P-site-bound deacylated tRNA move to the P and E sites, respectively. Catalyzes the coordinated movement of the two tRNA molecules, the mRNA and conformational changes in the ribosome. The sequence is that of Elongation factor G from Methylobacterium radiotolerans (strain ATCC 27329 / DSM 1819 / JCM 2831 / NBRC 15690 / NCIMB 10815 / 0-1).